The following is a 379-amino-acid chain: Glutamate 5-kinase (379 aa).

An ATP-binding site is contributed by Lys-19. The substrate site is built by Ser-59, Asp-146, and Asn-158. ATP-binding positions include 178–179 (TD) and 220–226 (TGGMATK). The PUA domain maps to 285-363 (SGDIIIDDGA…KDIISILGHD (79 aa)).

This sequence belongs to the glutamate 5-kinase family.

It localises to the cytoplasm. The enzyme catalyses L-glutamate + ATP = L-glutamyl 5-phosphate + ADP. It participates in amino-acid biosynthesis; L-proline biosynthesis; L-glutamate 5-semialdehyde from L-glutamate: step 1/2. In terms of biological role, catalyzes the transfer of a phosphate group to glutamate to form L-glutamate 5-phosphate. This Vibrio parahaemolyticus serotype O3:K6 (strain RIMD 2210633) protein is Glutamate 5-kinase.